The primary structure comprises 185 residues: Ribosome-recycling factor (185 aa).

The tract at residues 142–165 (IVKDGDAGEDEGSRAEKELDGLTK) is disordered.

It belongs to the RRF family.

Its subcellular location is the cytoplasm. Its function is as follows. Responsible for the release of ribosomes from messenger RNA at the termination of protein biosynthesis. May increase the efficiency of translation by recycling ribosomes from one round of translation to another. The sequence is that of Ribosome-recycling factor from Renibacterium salmoninarum (strain ATCC 33209 / DSM 20767 / JCM 11484 / NBRC 15589 / NCIMB 2235).